The following is a 334-amino-acid chain: L-lactate dehydrogenase B chain (334 aa).

Ala-2 is modified (N-acetylalanine). Lys-7 carries the post-translational modification N6-acetyllysine. At Ser-44 the chain carries Phosphoserine. Residues 53-58 (DVLEDK) and Arg-100 each bind NAD(+). Lys-58 carries the N6-acetyllysine modification. Arg-107 contacts substrate. At Lys-119 the chain carries N6-acetyllysine. Residue Asn-139 coordinates NAD(+). Residues Asn-139 and Arg-170 each coordinate substrate. His-194 functions as the Proton acceptor in the catalytic mechanism. Tyr-240 is subject to Phosphotyrosine. Thr-249 contributes to the substrate binding site. N6-acetyllysine is present on Lys-329.

This sequence belongs to the LDH/MDH superfamily. LDH family. As to quaternary structure, homotetramer. Interacts with PTEN upstream reading frame protein MP31; the interaction leads to inhibition of mitochondrial lactate dehydrogenase activity, preventing conversion of lactate to pyruvate in mitochondria.

Its subcellular location is the cytoplasm. The protein localises to the mitochondrion inner membrane. It catalyses the reaction (S)-lactate + NAD(+) = pyruvate + NADH + H(+). It functions in the pathway fermentation; pyruvate fermentation to lactate; (S)-lactate from pyruvate: step 1/1. Interconverts simultaneously and stereospecifically pyruvate and lactate with concomitant interconversion of NADH and NAD(+). The polypeptide is L-lactate dehydrogenase B chain (LDHB) (Monodelphis domestica (Gray short-tailed opossum)).